The primary structure comprises 419 residues: Glutamyl-tRNA reductase (419 aa).

Substrate-binding positions include 49 to 52 (TCNR), serine 107, 112 to 114 (EPQ), and glutamine 118. The active-site Nucleophile is the cysteine 50. 187-192 (GAGETI) lines the NADP(+) pocket.

Belongs to the glutamyl-tRNA reductase family. As to quaternary structure, homodimer.

It catalyses the reaction (S)-4-amino-5-oxopentanoate + tRNA(Glu) + NADP(+) = L-glutamyl-tRNA(Glu) + NADPH + H(+). It functions in the pathway porphyrin-containing compound metabolism; protoporphyrin-IX biosynthesis; 5-aminolevulinate from L-glutamyl-tRNA(Glu): step 1/2. Its function is as follows. Catalyzes the NADPH-dependent reduction of glutamyl-tRNA(Glu) to glutamate 1-semialdehyde (GSA). This Vibrio vulnificus (strain CMCP6) protein is Glutamyl-tRNA reductase.